Consider the following 519-residue polypeptide: MDLVRVASPEPGPAAAWGPNKCPWATPQNTISCSLSDVMSEQLAKELQLEEEAAAFPEVTVAEGPFITGENIDTSSDLMLAQMLQMEFDREYDAQLRREEKKFNGDSKVCISFENYRKVHPYEDSDSSEDEVDWQDTRDDPYRPAKPIPTPKKGFIGKGKDITTKHDEVVCGRKNTARMENFAPGFQVGDGIGMDLKLSNHVFNALKQHAYSEERRSARLHEKKEHSTAEKAVDPKTRLLMYKMVNSGMLETITGCISTGKESVVFHAYGGSMEDGKEDSKVIPTECAIKVFKTTLNEFKNRDKYIKDDFRFKDRFSKLNPRKIIRMWAEKEMHNLTRMQRAGIPCPTVVLLKKHILVMSFIGHDQVPAPKLKEVKLSSEEMKDAYYQTLHLMQQLYDECTLVHADLSEYNMLWHAGKVWLIDVSQSVEPTHPHGLEFLFRDCRNVSQFFQKGGVKEALGERELFNAVSGLNISADNEADFLAEIEALEKMNEDHVQKNGRKAASFLKDDGGPPILYDE.

Serine 8 and serine 112 each carry phosphoserine. At tyrosine 122 the chain carries Phosphotyrosine. Residues 122–159 (YEDSDSSEDEVDWQDTRDDPYRPAKPIPTPKKGFIGKG) form a disordered region. Over residues 124 to 134 (DSDSSEDEVDW) the composition is skewed to acidic residues. Serine 125, serine 127, and serine 128 each carry phosphoserine. The Protein kinase domain occupies 251–519 (ETITGCISTG…DGGPPILYDE (269 aa)). ATP-binding positions include 257–265 (ISTGKESVV) and lysine 290. Residue aspartate 406 is the Proton acceptor of the active site.

The protein belongs to the protein kinase superfamily. RIO-type Ser/Thr kinase family. In terms of assembly, interacts with CASP10. Interacts with IRF3; RIOK3 probably mediates the interaction of TBK1 with IRF3. Associated with 40S pre-ribosomal particles. It depends on Mg(2+) as a cofactor. In terms of processing, autophosphorylated (in vitro).

The protein resides in the cytoplasm. It carries out the reaction L-seryl-[protein] + ATP = O-phospho-L-seryl-[protein] + ADP + H(+). The catalysed reaction is L-threonyl-[protein] + ATP = O-phospho-L-threonyl-[protein] + ADP + H(+). Involved in regulation of type I interferon (IFN)-dependent immune response which plays a critical role in the innate immune response against DNA and RNA viruses. May act as an adapter protein essential for the recruitment of TBK1 to IRF3. Phosphorylates IFIH1 within the C-terminal region interfering with IFIH1 filament assembly on long dsRNA and resulting in attenuated IFIH1-signaling. Can inhibit CASP10 isoform 7-mediated activation of the NF-kappaB signaling pathway. May play a role in the biogenesis of the 40S ribosomal subunit. Involved in the processing of 21S pre-rRNA to the mature 18S rRNA. The polypeptide is Serine/threonine-protein kinase RIO3 (RIOK3) (Bos taurus (Bovine)).